We begin with the raw amino-acid sequence, 83 residues long: Mu-theraphotoxin-Hhn2j 1 (83 aa).

Positions 1–21 are cleaved as a signal peptide; it reads MKASMFLALAGLVLLFVVGYA. Positions 22 to 48 are excised as a propeptide; the sequence is SESEEKEFPIELLSKIFAVDVFKGEER. Intrachain disulfides connect Cys50–Cys65, Cys57–Cys70, and Cys64–Cys77. Leucine amide is present on Leu81.

Belongs to the neurotoxin 10 (Hwtx-1) family. 15 (Hntx-3) subfamily. Monomer. Expressed by the venom gland.

The protein localises to the secreted. Its function is as follows. Lethal neurotoxin. Selectively blocks tetrodotoxin-sensitive voltage-gated sodium channels (Nav). Does not affect tetrodotoxin-resistant voltage-gated sodium channels or calcium channels. In Cyriopagopus hainanus (Chinese bird spider), this protein is Mu-theraphotoxin-Hhn2j 1.